Here is a 206-residue protein sequence, read N- to C-terminus: ATP-dependent dethiobiotin synthetase BioD (206 aa).

An ATP-binding site is contributed by 12-17 (DSGKTL). Threonine 16 lines the Mg(2+) pocket. Lysine 32 is a catalytic residue. Glutamate 99 is a Mg(2+) binding site. An ATP-binding site is contributed by 99–102 (EGAG).

It belongs to the dethiobiotin synthetase family. In terms of assembly, homodimer. It depends on Mg(2+) as a cofactor.

The protein localises to the cytoplasm. The catalysed reaction is (7R,8S)-7,8-diammoniononanoate + CO2 + ATP = (4R,5S)-dethiobiotin + ADP + phosphate + 3 H(+). The protein operates within cofactor biosynthesis; biotin biosynthesis; biotin from 7,8-diaminononanoate: step 1/2. Catalyzes a mechanistically unusual reaction, the ATP-dependent insertion of CO2 between the N7 and N8 nitrogen atoms of 7,8-diaminopelargonic acid (DAPA, also called 7,8-diammoniononanoate) to form a ureido ring. The polypeptide is ATP-dependent dethiobiotin synthetase BioD (Cytophaga hutchinsonii (strain ATCC 33406 / DSM 1761 / CIP 103989 / NBRC 15051 / NCIMB 9469 / D465)).